A 396-amino-acid polypeptide reads, in one-letter code: Tail sheath protein (396 aa).

The protein belongs to the myoviridae tail sheath protein family. In terms of assembly, homomultimer.

It localises to the virion. The protein localises to the host cytoplasm. Polymerizes as an extended helical structure around the baseplate-tail tube complex. During ejection, the sheath shifts to a contracted form, thereby making the inner tail tube protrude through the host cell envelope. This is Tail sheath protein (FI) from Enterobacteriaceae (Bacteriophage P2).